Reading from the N-terminus, the 493-residue chain is Probable cytosol aminopeptidase (493 aa).

The Mn(2+) site is built by Lys-257 and Asp-262. Residue Lys-269 is part of the active site. Mn(2+) is bound by residues Asp-280, Asp-339, and Glu-341. Arg-343 is a catalytic residue.

It belongs to the peptidase M17 family. It depends on Mn(2+) as a cofactor.

The protein localises to the cytoplasm. The catalysed reaction is Release of an N-terminal amino acid, Xaa-|-Yaa-, in which Xaa is preferably Leu, but may be other amino acids including Pro although not Arg or Lys, and Yaa may be Pro. Amino acid amides and methyl esters are also readily hydrolyzed, but rates on arylamides are exceedingly low.. It catalyses the reaction Release of an N-terminal amino acid, preferentially leucine, but not glutamic or aspartic acids.. Functionally, presumably involved in the processing and regular turnover of intracellular proteins. Catalyzes the removal of unsubstituted N-terminal amino acids from various peptides. This Aquifex aeolicus (strain VF5) protein is Probable cytosol aminopeptidase (pepA).